We begin with the raw amino-acid sequence, 119 residues long: uncharacterized protein (119 aa).

The N-terminal stretch at 1-18 is a signal peptide; that stretch reads MPAVFMLASSSALQCGRG. A disordered region spans residues 23–100; it reads PRTEVGAGHS…MFPGPLRGPA (78 aa). The segment covering 43–71 has biased composition (polar residues); sequence GNQTSVIPATSRQAALGTSWTQRRTQPLQ. Asn-44 carries N-linked (GlcNAc...) asparagine glycosylation.

The protein resides in the secreted. This is an uncharacterized protein from Homo sapiens (Human).